Consider the following 487-residue polypeptide: ATP synthase subunit beta (487 aa).

Residue 164-171 (GGAGVGKT) participates in ATP binding.

Belongs to the ATPase alpha/beta chains family. In terms of assembly, F-type ATPases have 2 components, CF(1) - the catalytic core - and CF(0) - the membrane proton channel. CF(1) has five subunits: alpha(3), beta(3), gamma(1), delta(1), epsilon(1). CF(0) has four main subunits: a(1), b(1), b'(1) and c(9-12).

It is found in the cellular thylakoid membrane. It catalyses the reaction ATP + H2O + 4 H(+)(in) = ADP + phosphate + 5 H(+)(out). Functionally, produces ATP from ADP in the presence of a proton gradient across the membrane. The catalytic sites are hosted primarily by the beta subunits. This Synechococcus sp. (strain CC9605) protein is ATP synthase subunit beta.